A 583-amino-acid polypeptide reads, in one-letter code: uncharacterized protein (583 aa).

This is an uncharacterized protein from Acanthamoeba polyphaga (Amoeba).